The following is a 392-amino-acid chain: Tryptophan synthase beta chain (392 aa).

Lys-86 bears the N6-(pyridoxal phosphate)lysine mark.

Belongs to the TrpB family. Tetramer of two alpha and two beta chains. Pyridoxal 5'-phosphate serves as cofactor.

It catalyses the reaction (1S,2R)-1-C-(indol-3-yl)glycerol 3-phosphate + L-serine = D-glyceraldehyde 3-phosphate + L-tryptophan + H2O. Its pathway is amino-acid biosynthesis; L-tryptophan biosynthesis; L-tryptophan from chorismate: step 5/5. The beta subunit is responsible for the synthesis of L-tryptophan from indole and L-serine. The sequence is that of Tryptophan synthase beta chain (trpB) from Buchnera aphidicola subsp. Schlechtendalia chinensis.